Here is a 232-residue protein sequence, read N- to C-terminus: Dehydrogenase OXI1 (232 aa).

The signal sequence occupies residues 1–20; sequence MTETFKVAITFVSPSSEALA. L19 is an NADP(+) binding site. N28 is a glycosylation site (N-linked (GlcNAc...) asparagine). NADP(+)-binding residues include D42, N70, and K103. N-linked (GlcNAc...) asparagine glycosylation is present at N117. Catalysis depends on proton donor residues S119 and S121. Residues Y133, K137, and T168 each coordinate NADP(+). Y133 (proton acceptor) is an active-site residue. Residue K137 is the Lowers pKa of active site Tyr of the active site.

This sequence belongs to the short-chain dehydrogenases/reductases (SDR) family.

The enzyme catalyses a primary alcohol + NAD(+) = an aldehyde + NADH + H(+). The catalysed reaction is a secondary alcohol + NAD(+) = a ketone + NADH + H(+). It participates in mycotoxin biosynthesis. In terms of biological role, dehydrogenase; part of the Tox1A locus, one of the 2 loci that mediate the biosynthesis of T-toxin, a family of linear polyketides 37 to 45 carbons in length, of which the major component is 41 carbons, and which leads to high virulence to maize. One of the PKSs (PKS1 or PKS2) could synthesize a precursor, used subsequently by the other PKS as starter unit, to add additional carbons. Variability in the length of the final carbon backbone C35-47 could be achieved by varying the number of condensation cycles, or use of different starter or extender units or might be due to decarboxylation of the penultimate product, catalyzed by DEC1. Additional proteins are required for the biosynthesis of T-toxin, including oxidoreductases RED1, RED2, RED3, LAM1 and OXI1, as well as esterase TOX9. This is Dehydrogenase OXI1 from Cochliobolus heterostrophus (strain C4 / ATCC 48331 / race T) (Southern corn leaf blight fungus).